We begin with the raw amino-acid sequence, 257 residues long: Type III pantothenate kinase (257 aa).

Position 5-12 (5-12 (DIGNTNIK)) interacts with ATP. 107–110 (GSDR) lines the substrate pocket. Asp109 functions as the Proton acceptor in the catalytic mechanism. An ATP-binding site is contributed by Thr133.

Belongs to the type III pantothenate kinase family. As to quaternary structure, homodimer. NH4(+) serves as cofactor. K(+) is required as a cofactor.

Its subcellular location is the cytoplasm. The enzyme catalyses (R)-pantothenate + ATP = (R)-4'-phosphopantothenate + ADP + H(+). It participates in cofactor biosynthesis; coenzyme A biosynthesis; CoA from (R)-pantothenate: step 1/5. Functionally, catalyzes the phosphorylation of pantothenate (Pan), the first step in CoA biosynthesis. This chain is Type III pantothenate kinase, found in Ehrlichia ruminantium (strain Gardel).